The primary structure comprises 227 residues: Isopentenyl-diphosphate Delta-isomerase 1 (227 aa).

Lysine 36 provides a ligand contact to substrate. Mg(2+)-binding residues include histidine 40 and histidine 51. The Nudix hydrolase domain occupies 49–199 (LLHRAFSVFL…EIKLTPWFKI (151 aa)). The substrate site is built by arginine 70 and lysine 74. Residue cysteine 86 is part of the active site. Serine 87 contacts substrate. Mg(2+)-binding residues include glutamate 146 and glutamate 148. Glutamate 148 is a catalytic residue. Lysine 176 bears the N6-acetyllysine mark. The Microbody targeting signal signature appears at 225 to 227 (HRL).

The protein belongs to the IPP isomerase type 1 family. As to quaternary structure, monomer. The cofactor is Mg(2+).

It is found in the peroxisome. The catalysed reaction is isopentenyl diphosphate = dimethylallyl diphosphate. The protein operates within isoprenoid biosynthesis; dimethylallyl diphosphate biosynthesis; dimethylallyl diphosphate from isopentenyl diphosphate: step 1/1. In terms of biological role, catalyzes the 1,3-allylic rearrangement of the homoallylic substrate isopentenyl (IPP) to its highly electrophilic allylic isomer, dimethylallyl diphosphate (DMAPP). The chain is Isopentenyl-diphosphate Delta-isomerase 1 (Idi1) from Mus musculus (Mouse).